The chain runs to 206 residues: Urease accessory protein UreG (206 aa).

Position 11–18 (11–18) interacts with GTP; sequence GPVGAGKT.

The protein belongs to the SIMIBI class G3E GTPase family. UreG subfamily. Homodimer. UreD, UreF and UreG form a complex that acts as a GTP-hydrolysis-dependent molecular chaperone, activating the urease apoprotein by helping to assemble the nickel containing metallocenter of UreC. The UreE protein probably delivers the nickel.

The protein localises to the cytoplasm. Facilitates the functional incorporation of the urease nickel metallocenter. This process requires GTP hydrolysis, probably effectuated by UreG. In Ureaplasma parvum serovar 3 (strain ATCC 700970), this protein is Urease accessory protein UreG.